We begin with the raw amino-acid sequence, 56 residues long: Protein p56 (56 aa).

It belongs to the phi29likevirus protein p56 family. As to quaternary structure, homodimer. Interacts with host UDG; this interaction inhibits the uracil-DNA glycosylase.

Inhibits the host uracil-DNA glycosylase (UDG), an enzyme which removes uracil residues from DNA by the base excision repair. Interacts with host uracil-DNA glycosylase and prevents the latter from binding to DNA. Since the viral DNA polymerase efficiently incorporates dUMP into DNA, the virus needs to prevent the deleterious effect caused by host UDG when it eliminates uracil residues present in the viral genome. In Bacillus phage PZA (Bacteriophage PZA), this protein is Protein p56 (1B).